Consider the following 274-residue polypeptide: Fatty-acid O-methyltransferase (274 aa).

The protein belongs to the methyltransferase superfamily.

It carries out the reaction a fatty acid + S-adenosyl-L-methionine = a fatty acid methyl ester + S-adenosyl-L-homocysteine. In terms of biological role, O-methyltransferase that modifies the hydroxy group of the fatty acids. Oleate is the most effective fatty acid acceptor. The polypeptide is Fatty-acid O-methyltransferase (mtf2) (Mycolicibacterium smegmatis (strain ATCC 700084 / mc(2)155) (Mycobacterium smegmatis)).